A 145-amino-acid chain; its full sequence is Protein SprT-like (145 aa).

The SprT-like domain occupies 4–140; the sequence is TNYVQEVSLA…VCGNCHGKLI (137 aa). His64 is a Zn(2+) binding site. Residue Glu65 is part of the active site. His68 is a Zn(2+) binding site.

It belongs to the SprT family. The cofactor is Zn(2+).

The protein localises to the cytoplasm. This chain is Protein SprT-like, found in Streptococcus pyogenes serotype M6 (strain ATCC BAA-946 / MGAS10394).